The sequence spans 513 residues: Ferulic acid decarboxylase 1 (513 aa).

Mn(2+) contacts are provided by asparagine 174, histidine 197, and glutamate 240. Residues asparagine 174–arginine 179, glutamine 196–histidine 197, and glutamate 240 each bind prenylated FMN. Glutamate 289 serves as the catalytic Proton donor. Prenylated FMN is bound at residue lysine 405.

Belongs to the UbiD family. UbiD-like/FDC subfamily. In terms of assembly, homodimer. May form higher order oligomers. Mn(2+) serves as cofactor. Prenylated FMN is required as a cofactor.

It localises to the cytoplasm. The catalysed reaction is (E)-4-coumarate + H(+) = 4-vinylphenol + CO2. The enzyme catalyses (E)-cinnamate + H(+) = styrene + CO2. It carries out the reaction (E)-ferulate + H(+) = 2-methoxy-4-vinylphenol + CO2. Functionally, catalyzes the reversible decarboxylation of aromatic carboxylic acids like ferulic acid, p-coumaric acid or cinnamic acid, producing the corresponding vinyl derivatives 4-vinylphenol, 4-vinylguaiacol, and styrene, respectively, which play the role of aroma metabolites. In Candida dubliniensis (strain CD36 / ATCC MYA-646 / CBS 7987 / NCPF 3949 / NRRL Y-17841) (Yeast), this protein is Ferulic acid decarboxylase 1.